The primary structure comprises 213 residues: Probable inactive serine/threonine-protein kinase DDB_G0280559 (213 aa).

Residues 1–211 (MVLRYSYVFK…WNEIVNHSFF (211 aa)) form the Protein kinase domain.

The protein belongs to the protein kinase superfamily. Ser/Thr protein kinase family.

This chain is Probable inactive serine/threonine-protein kinase DDB_G0280559, found in Dictyostelium discoideum (Social amoeba).